Consider the following 369-residue polypeptide: Spore membrane assembly protein 2 (369 aa).

Topologically, residues 1–6 (MLFPKR) are cytoplasmic. Residues 7–27 (LIVWGVLLILSLSQFVLYLPA) traverse the membrane as a helical segment. At 28–220 (TTCTNSKGLR…NLAFILMMFN (193 aa)) the chain is on the lumenal side. A helical transmembrane segment spans residues 221 to 241 (GMVFYFAVLEIIVGFLSICVV). Topologically, residues 242–265 (SAFGGALSVGKRHRLFPILLKSSS) are cytoplasmic. A helical transmembrane segment spans residues 266 to 286 (SILVVIATLTILCNIVYLIAL). Over 287–319 (KTLEPEEVTDVGSDNAAVHTTGWELLKVNVGSG) the chain is Lumenal. The helical transmembrane segment at 320–340 (FIMGLARYAIQWVLLVLAFLA) threads the bilayer. Residues 341 to 369 (ANHYKAKPKKSDKYTEDTSNSPSPDLMEK) are Cytoplasmic-facing. Residues 348–369 (PKKSDKYTEDTSNSPSPDLMEK) form a disordered region.

The protein belongs to the SMA2 family.

It localises to the prospore membrane. It is found in the endoplasmic reticulum. Its function is as follows. Involved in spore and ascus formation. Required for the efficient assembly of the precursors of the prospore membrane to a continuous prospore membrane. The chain is Spore membrane assembly protein 2 (SMA2) from Saccharomyces cerevisiae (strain YJM789) (Baker's yeast).